Consider the following 107-residue polypeptide: Parvalbumin beta (107 aa).

Ser-1 is modified (N-acetylserine). 2 consecutive EF-hand domains span residues 37–72 (KSLDDVKKAFYVIDQDKSGFIEEDELKLFLQNFSPS) and 76–107 (LTDAETKAFLADGDKDGDGMIGVDEFAAMIKA). Positions 50, 52, 54, 56, 58, 61, 89, 91, 93, 95, and 100 each coordinate Ca(2+).

This sequence belongs to the parvalbumin family.

In terms of biological role, in muscle, parvalbumin is thought to be involved in relaxation after contraction. It binds two calcium ions. The polypeptide is Parvalbumin beta (Esox lucius (Northern pike)).